Here is a 117-residue protein sequence, read N- to C-terminus: Protein Wnt-6 (117 aa).

Ser1 carries O-palmitoleoyl serine; by PORCN lipidation. An intrachain disulfide couples Cys83 to Cys98. Asn84 carries an N-linked (GlcNAc...) asparagine glycan.

The protein belongs to the Wnt family. Palmitoleoylation is required for efficient binding to frizzled receptors. Depalmitoleoylation leads to Wnt signaling pathway inhibition.

It is found in the secreted. The protein localises to the extracellular space. It localises to the extracellular matrix. Its function is as follows. Ligand for members of the frizzled family of seven transmembrane receptors. Probable developmental protein. May be a signaling molecule which affects the development of discrete regions of tissues. Is likely to signal over only few cell diameters. This Evasterias troschelii (Mottled sea star) protein is Protein Wnt-6 (WNT-6).